The primary structure comprises 467 residues: MSSNDSIMLTPLKEQDPTVAEIMRHEADRQRSSVVLIASENFTSRAVMDALGSVMSNKYSEGYPGARYYGGNKFIDQIETLCQERALAAFNLDPAKWGVNVQCLSGSPANMQVYQAIMPPHGRLMGLDLPSGGHLSHGYQTDTKKISAVSTYFESMPYRVDPNTGLIDYDMLEHDAQLFRPKILVAGTSAYCRLIDYARMRQIADSVNAYLVVDMAHISGLVSAGVIPSPFEYADVVTTTTHKSLRGPRGAMIFFRRGLRKHDKKGNPIYYDLEDKINFSVFPGHQGGPHNHTITALAVALKQCQEPAYKEYQAQVVKNAKVCEEEFKKRGYKLAADGTDSHMVLVDVKSKGVDGARAERVLELINIVTNKNTVPSDKSAFSPSGIRVGTPAMTTRGFKEQDFVRVVDYIDRALTFAANLQKELPKDANKLKDFKAKLGEGEQYPELVQLQKEVAEWASSFPLADKW.

Lysine 243 is subject to N6-(pyridoxal phosphate)lysine.

Belongs to the SHMT family. As to quaternary structure, homotetramer. The cofactor is pyridoxal 5'-phosphate.

The protein localises to the cytoplasm. It catalyses the reaction (6R)-5,10-methylene-5,6,7,8-tetrahydrofolate + glycine + H2O = (6S)-5,6,7,8-tetrahydrofolate + L-serine. It participates in one-carbon metabolism; tetrahydrofolate interconversion. Its function is as follows. Interconversion of serine and glycine. This Schizosaccharomyces pombe (strain 972 / ATCC 24843) (Fission yeast) protein is Probable serine hydroxymethyltransferase, cytosolic.